A 99-amino-acid polypeptide reads, in one-letter code: uncharacterized protein (99 aa).

This is an uncharacterized protein from Lepidoptera (butterflies and moths).